The sequence spans 515 residues: SWI/SNF global transcription activator complex subunit snf59 (515 aa).

The interval 1–226 (MEEEDITLEH…IHHVDSKNEE (226 aa)) is disordered. 5 stretches are compositionally biased toward basic and acidic residues: residues 7-37 (TLEH…DNSN), 50-59 (EEPKYHDNSN), 73-85 (EPEH…KEST), 94-103 (EEPKHHDNSN), and 116-125 (EEPKHHDSSN). Residues 126–136 (KESTNLDNSNM) show a composition bias toward polar residues. Residues 140–226 (ENQKNFKIEE…IHHVDSKNEE (87 aa)) are compositionally biased toward basic and acidic residues.

Belongs to the RSC7/SWP82 family. SWP82 subfamily. In terms of assembly, component of the SWI/SNF global transcription activator complex composed of at least arp9, arp42, snf5, snf22, snf30, snf59, sol1, ssr1, ssr2, ssr3, ssr4 and tfg3.

The protein resides in the nucleus. Its function is as follows. Component of the SWI/SNF complex, an ATP-dependent chromatin remodeling complex, which is required for the positive and negative regulation of gene expression of a large number of genes. It changes chromatin structure by altering DNA-histone contacts within a nucleosome, leading eventually to a change in nucleosome position, thus facilitating or repressing binding of gene-specific transcription factors. In Schizosaccharomyces pombe (strain 972 / ATCC 24843) (Fission yeast), this protein is SWI/SNF global transcription activator complex subunit snf59 (snf59).